A 98-amino-acid chain; its full sequence is Protein Frey 1 (98 aa).

A helical membrane pass occupies residues 13–29 (AGLSLFLHLILAVALLR). Residues 60 to 87 (YGILPKHPRPRGPRPLLSRAQQRKRDGP) are disordered.

Interacts with SPPL2C (via active sites); the interaction stabilizes FREY1 protein and inhibits SPPL2C proteolytic activity. Interacts with IZUMO1; the interaction retains IZUMO1 at the endoplasmic reticulum membrane and coordinates IZUMO1 complex assembly.

It localises to the endoplasmic reticulum membrane. Key regulator for male fertility expressed transiently in round spermatids where it recruits IZUMO1 at the endoplasmic reticulum (ER) membrane and coordinates the oolemmal binding multimeric complex (IZUMO1 complex) assembly. Upon complete assembly of the IZUMO1 complex, its ER retention is released, facilitating IZUMO1 complex export to the acrosome. Through the interaction with SPPL2C, inhibits its intramembrane protease activity directly accessing the catalytic center of an I-CLiP. This chain is Protein Frey 1, found in Homo sapiens (Human).